The primary structure comprises 254 residues: 5'-nucleotidase SurE (254 aa).

A divalent metal cation-binding residues include D8, D9, S38, and N91.

Belongs to the SurE nucleotidase family. A divalent metal cation is required as a cofactor.

The protein resides in the cytoplasm. It catalyses the reaction a ribonucleoside 5'-phosphate + H2O = a ribonucleoside + phosphate. In terms of biological role, nucleotidase that shows phosphatase activity on nucleoside 5'-monophosphates. The chain is 5'-nucleotidase SurE from Anaeromyxobacter dehalogenans (strain 2CP-C).